A 96-amino-acid chain; its full sequence is Large ribosomal subunit protein bL27 (96 aa).

Residues 1–9 (MLKFDIQHF) constitute a propeptide that is removed on maturation. The interval 1–33 (MLKFDIQHFAHKKGGGSTSNGRDSESKRLGAKR) is disordered. A compositionally biased stretch (basic and acidic residues) spans 22–33 (RDSESKRLGAKR).

The protein belongs to the bacterial ribosomal protein bL27 family. Post-translationally, the N-terminus is cleaved by ribosomal processing cysteine protease Prp.

This Listeria innocua serovar 6a (strain ATCC BAA-680 / CLIP 11262) protein is Large ribosomal subunit protein bL27.